An 800-amino-acid polypeptide reads, in one-letter code: Phenylalanine--tRNA ligase beta subunit (800 aa).

Residues 39-152 (AAGLSKIVVG…EDAVPGEEVF (114 aa)) form the tRNA-binding domain. Residues 405–480 (TSDVEVSSTL…RIYGYDRLPT (76 aa)) enclose the B5 domain. Mg(2+)-binding residues include D458, D464, E467, and E468. One can recognise an FDX-ACB domain in the interval 707–800 (TKFPAVSRDV…LEEKVNAEVR (94 aa)).

Belongs to the phenylalanyl-tRNA synthetase beta subunit family. Type 1 subfamily. In terms of assembly, tetramer of two alpha and two beta subunits. Mg(2+) is required as a cofactor.

The protein resides in the cytoplasm. It catalyses the reaction tRNA(Phe) + L-phenylalanine + ATP = L-phenylalanyl-tRNA(Phe) + AMP + diphosphate + H(+). This chain is Phenylalanine--tRNA ligase beta subunit, found in Streptococcus pneumoniae (strain ATCC BAA-255 / R6).